Consider the following 297-residue polypeptide: NAD kinase (297 aa).

The active-site Proton acceptor is the Asp-74. NAD(+)-binding positions include 74 to 75 (DG), Arg-79, 148 to 149 (NE), Arg-176, Asp-178, 189 to 194 (TAYALS), and Gln-248.

Belongs to the NAD kinase family. A divalent metal cation serves as cofactor.

Its subcellular location is the cytoplasm. The catalysed reaction is NAD(+) + ATP = ADP + NADP(+) + H(+). Its function is as follows. Involved in the regulation of the intracellular balance of NAD and NADP, and is a key enzyme in the biosynthesis of NADP. Catalyzes specifically the phosphorylation on 2'-hydroxyl of the adenosine moiety of NAD to yield NADP. In Blochmanniella pennsylvanica (strain BPEN), this protein is NAD kinase.